A 142-amino-acid chain; its full sequence is Large ribosomal subunit protein uL11 (142 aa).

The protein belongs to the universal ribosomal protein uL11 family. In terms of assembly, part of the ribosomal stalk of the 50S ribosomal subunit. Interacts with L10 and the large rRNA to form the base of the stalk. L10 forms an elongated spine to which L12 dimers bind in a sequential fashion forming a multimeric L10(L12)X complex. Post-translationally, one or more lysine residues are methylated.

Its function is as follows. Forms part of the ribosomal stalk which helps the ribosome interact with GTP-bound translation factors. The sequence is that of Large ribosomal subunit protein uL11 from Enterobacter sp. (strain 638).